The chain runs to 389 residues: Alanine racemase (389 aa).

The active-site Proton acceptor; specific for D-alanine is the lysine 48. Position 48 is an N6-(pyridoxal phosphate)lysine (lysine 48). Position 144 (arginine 144) interacts with substrate. Catalysis depends on tyrosine 281, which acts as the Proton acceptor; specific for L-alanine. Methionine 329 provides a ligand contact to substrate.

Belongs to the alanine racemase family. Requires pyridoxal 5'-phosphate as cofactor.

The catalysed reaction is L-alanine = D-alanine. The protein operates within amino-acid biosynthesis; D-alanine biosynthesis; D-alanine from L-alanine: step 1/1. Its function is as follows. Catalyzes the interconversion of L-alanine and D-alanine. May also act on other amino acids. This Leptospira interrogans serogroup Icterohaemorrhagiae serovar copenhageni (strain Fiocruz L1-130) protein is Alanine racemase (alr).